A 430-amino-acid polypeptide reads, in one-letter code: Trigger factor (430 aa).

The PPIase FKBP-type domain maps to 163–248; the sequence is GNIAIIDFKG…VKEIKVKEIP (86 aa).

This sequence belongs to the FKBP-type PPIase family. Tig subfamily.

The protein resides in the cytoplasm. The enzyme catalyses [protein]-peptidylproline (omega=180) = [protein]-peptidylproline (omega=0). Its function is as follows. Involved in protein export. Acts as a chaperone by maintaining the newly synthesized protein in an open conformation. Functions as a peptidyl-prolyl cis-trans isomerase. The protein is Trigger factor of Clostridium kluyveri (strain NBRC 12016).